A 455-amino-acid chain; its full sequence is Membrane-bound lytic murein transglycosylase F (455 aa).

An N-terminal signal peptide occupies residues 1–21; sequence MPKSAVSLFAILLLAASVITA. Residues 22 to 264 are non-LT domain; the sequence is CSPQTRPDAM…HIKEQHFGHV (243 aa). The tract at residues 265-455 is LT domain; sequence KQFNYVTTSL…LKYLDEQGRL (191 aa). Glu309 is an active-site residue.

It in the N-terminal section; belongs to the bacterial solute-binding protein 3 family. In the C-terminal section; belongs to the transglycosylase Slt family.

The protein resides in the cell outer membrane. The enzyme catalyses Exolytic cleavage of the (1-&gt;4)-beta-glycosidic linkage between N-acetylmuramic acid (MurNAc) and N-acetylglucosamine (GlcNAc) residues in peptidoglycan, from either the reducing or the non-reducing ends of the peptidoglycan chains, with concomitant formation of a 1,6-anhydrobond in the MurNAc residue.. Functionally, murein-degrading enzyme that degrades murein glycan strands and insoluble, high-molecular weight murein sacculi, with the concomitant formation of a 1,6-anhydromuramoyl product. Lytic transglycosylases (LTs) play an integral role in the metabolism of the peptidoglycan (PG) sacculus. Their lytic action creates space within the PG sacculus to allow for its expansion as well as for the insertion of various structures such as secretion systems and flagella. This chain is Membrane-bound lytic murein transglycosylase F, found in Idiomarina loihiensis (strain ATCC BAA-735 / DSM 15497 / L2-TR).